Here is a 390-residue protein sequence, read N- to C-terminus: Ankyrin repeat domain-containing protein 63 (390 aa).

ANK repeat units lie at residues 11-40 (AGTRTFLEAMQAGKVHLARFVLDALDRSII), 46-79 (QGRTPLMVAVGLPDPAMRSRFVRLLLEQGAAVNL), 83-112 (RGRTALSLACERGHLDAVQLLVQFSGDPEA), 116-145 (AGNSPVMWAAACGHGAVLEFLVRSFRRLGL), and 153-182 (AGLTALQLAASRGHGTCVQALTGPWGRAAA). 2 disordered regions span residues 181-213 (AAAAAARGSNSDSPPGHPAPAPSPERRRPSPRR) and 226-245 (AGGHGHGHGHGHGHGGELAS). Serine 193 carries the post-translational modification Phosphoserine. Position 304 is a phosphoserine (serine 304). Residues 320–377 (VGLSPHPEGCPGSGRLGLRRRSTAPDIPSLVGEASGPESGPELENNALPFSVPGPKPW) form a disordered region.

The chain is Ankyrin repeat domain-containing protein 63 from Mus musculus (Mouse).